A 134-amino-acid polypeptide reads, in one-letter code: Large-conductance mechanosensitive channel (134 aa).

The next 2 helical transmembrane spans lie at 10 to 30 (FAMR…GAFG) and 76 to 96 (GAFL…FVVI).

The protein belongs to the MscL family. As to quaternary structure, homopentamer.

It is found in the cell inner membrane. Its function is as follows. Channel that opens in response to stretch forces in the membrane lipid bilayer. May participate in the regulation of osmotic pressure changes within the cell. In Prosthecochloris aestuarii (strain DSM 271 / SK 413), this protein is Large-conductance mechanosensitive channel.